A 142-amino-acid chain; its full sequence is Large ribosomal subunit protein uL13 (142 aa).

Belongs to the universal ribosomal protein uL13 family. In terms of assembly, part of the 50S ribosomal subunit.

This protein is one of the early assembly proteins of the 50S ribosomal subunit, although it is not seen to bind rRNA by itself. It is important during the early stages of 50S assembly. The protein is Large ribosomal subunit protein uL13 of Actinobacillus pleuropneumoniae serotype 5b (strain L20).